Reading from the N-terminus, the 324-residue chain is Viral cathepsin (324 aa).

The first 18 residues, 1–18, serve as a signal peptide directing secretion; it reads MNKIVLYLLIYVGTFSAA. Positions 19-113 are cleaved as a propeptide — activation peptide; that stretch reads YDLLKAPSYF…VVLNRPPDKG (95 aa). Cystine bridges form between Cys-134/Cys-175, Cys-168/Cys-208, and Cys-263/Cys-311. Cys-137 is an active-site residue. An N-linked (GlcNAc...) asparagine; by host glycan is attached at Asn-159. Catalysis depends on residues His-270 and Asn-290.

It belongs to the peptidase C1 family. In terms of processing, synthesized as an inactive proenzyme and activated by proteolytic removal of the inhibitory propeptide.

It catalyses the reaction Endopeptidase of broad specificity, hydrolyzing substrates of both cathepsin L and cathepsin B.. Cysteine protease that plays an essential role in host liquefaction to facilitate horizontal transmission of the virus. May participate in the degradation of foreign protein expressed by the baculovirus system. This Choristoneura fumiferana defective polyhedrosis virus (Cfdef) protein is Viral cathepsin (Vcath).